We begin with the raw amino-acid sequence, 232 residues long: Enolase-phosphatase E1 (232 aa).

It belongs to the HAD-like hydrolase superfamily. MasA/MtnC family. Monomer. Requires Mg(2+) as cofactor.

It carries out the reaction 5-methylsulfanyl-2,3-dioxopentyl phosphate + H2O = 1,2-dihydroxy-5-(methylsulfanyl)pent-1-en-3-one + phosphate. It participates in amino-acid biosynthesis; L-methionine biosynthesis via salvage pathway; L-methionine from S-methyl-5-thio-alpha-D-ribose 1-phosphate: step 3/6. It functions in the pathway amino-acid biosynthesis; L-methionine biosynthesis via salvage pathway; L-methionine from S-methyl-5-thio-alpha-D-ribose 1-phosphate: step 4/6. In terms of biological role, bifunctional enzyme that catalyzes the enolization of 2,3-diketo-5-methylthiopentyl-1-phosphate (DK-MTP-1-P) into the intermediate 2-hydroxy-3-keto-5-methylthiopentenyl-1-phosphate (HK-MTPenyl-1-P), which is then dephosphorylated to form the acireductone 1,2-dihydroxy-3-keto-5-methylthiopentene (DHK-MTPene). This Xanthomonas campestris pv. campestris (strain B100) protein is Enolase-phosphatase E1.